The following is a 90-amino-acid chain: MSVKIRLTRMGSKKKPFYRINVADSRAPRDGKFIETVGTYNPLVTEEQVTLKEERVLEWLSKGAQPSDTVRNLLSKAGVMKKFHESKLSK.

It belongs to the bacterial ribosomal protein bS16 family.

This Lactococcus lactis subsp. lactis (strain IL1403) (Streptococcus lactis) protein is Small ribosomal subunit protein bS16.